Consider the following 151-residue polypeptide: Acidic phospholipase A2 6 (151 aa).

The N-terminal stretch at 1–27 (MYPAHLLVLLAVCVSLLGAASIPARPL) is a signal peptide. Cystine bridges form between cysteine 38/cysteine 104, cysteine 54/cysteine 151, cysteine 56/cysteine 72, cysteine 71/cysteine 132, cysteine 78/cysteine 125, cysteine 88/cysteine 118, and cysteine 111/cysteine 123. Positions 55, 57, and 59 each coordinate Ca(2+). Residue histidine 75 is part of the active site. Aspartate 76 provides a ligand contact to Ca(2+). Residue aspartate 126 is part of the active site.

This sequence belongs to the phospholipase A2 family. Group I subfamily. D49 sub-subfamily. Ca(2+) is required as a cofactor. As to expression, expressed by the venom gland.

The protein resides in the secreted. The enzyme catalyses a 1,2-diacyl-sn-glycero-3-phosphocholine + H2O = a 1-acyl-sn-glycero-3-phosphocholine + a fatty acid + H(+). PLA2 catalyzes the calcium-dependent hydrolysis of the 2-acyl groups in 3-sn-phosphoglycerides. This chain is Acidic phospholipase A2 6, found in Tropidechis carinatus (Australian rough-scaled snake).